The sequence spans 807 residues: Tyrosine-protein kinase receptor torso (807 aa).

Residues 1-28 (MYSEGKLLKVFLIFAGFIIFSLCGEVVS) form the signal peptide. Residues 29 to 370 (QRYPPAPGLL…RAFTPGMLRW (342 aa)) lie on the Extracellular side of the membrane. Cystine bridges form between Cys46–Cys61, Cys81–Cys203, Cys210–Cys239, and Cys259–Cys265. N-linked (GlcNAc...) asparagine glycans are attached at residues Asn54, Asn171, Asn183, and Asn195. N-linked (GlcNAc...) asparagine glycosylation is found at Asn307, Asn323, and Asn344. Residues 371-391 (VWAGATAGAGCAAGGLLAATL) traverse the membrane as a helical segment. Over 392 to 807 (LCCGHRRATS…SPPVIQTKTA (416 aa)) the chain is Cytoplasmic. The Protein kinase domain maps to 439–738 (VLLHEVIGEG…PTFPELHQKL (300 aa)). ATP contacts are provided by residues 445–453 (IGEGAFGVV) and Lys468. Asp607 acts as the Proton acceptor in catalysis.

Belongs to the protein kinase superfamily. Tyr protein kinase family. As to quaternary structure, homodimer; disulfide-linked. It depends on Mg(2+) as a cofactor. In terms of processing, may be auto-phosphorylated on tyrosine residues. At least one of the 3 cysteine residues Cys-381, Cys-393 or Cys-394 is involved in the formation of interchain disulfide bonds. The disulfide bond sites in the extracellular region are not involved in homodimer formation.

It is found in the cell membrane. The catalysed reaction is L-tyrosyl-[protein] + ATP = O-phospho-L-tyrosyl-[protein] + ADP + H(+). Functionally, probable receptor tyrosine kinase. During postembryonic development, involved in the initiation of metamorphosis probably by inducing the production of ecdysone in response to prothoracicotropic hormone (PTTH). Binding to PTTH stimulates activation of canonical MAPK signaling leading to ERK phosphorylation. This Bombyx mori (Silk moth) protein is Tyrosine-protein kinase receptor torso.